The primary structure comprises 3460 residues: Reelin (3460 aa).

An N-terminal signal peptide occupies residues 1–25; that stretch reads MERSGWARQTFLLALLLGATLRARA. The 165-residue stretch at 26-190 folds into the Reelin domain; it reads AAGYYPRFSP…GAPTDVTVHP (165 aa). Cysteine 40 and cysteine 126 are oxidised to a cystine. Asparagine 140 carries an N-linked (GlcNAc...) asparagine glycan. Cysteine 154 and cysteine 178 are oxidised to a cystine. 3 N-linked (GlcNAc...) asparagine glycosylation sites follow: asparagine 257, asparagine 289, and asparagine 305. A disulfide bridge connects residues cysteine 539 and cysteine 580. One copy of the BNR 1 repeat lies at 592 to 603; it reads EFSTNHGRSWSL. A disulfide bond links cysteine 608 and cysteine 613. An N-linked (GlcNAc...) asparagine glycan is attached at asparagine 628. An EGF-like 1 domain is found at 670–701; it reads IGPSCLKFCSGRGQCTRHGCKCDPGFSGPACE. 2 disulfide bridges follow: cysteine 674/cysteine 684 and cysteine 691/cysteine 700. The stretch at 798-809 is one BNR 2 repeat; the sequence is HYSYDNGITWKL. Cysteine 894 and cysteine 936 are oxidised to a cystine. The stretch at 951–962 is one BNR 3 repeat; that stretch reads EYSTNHGLTWHL. Cystine bridges form between cysteine 967-cysteine 974, cysteine 1033-cysteine 1043, and cysteine 1050-cysteine 1059. The region spanning 1029 to 1060 is the EGF-like 2 domain; that stretch reads IGQQCPNMCSGHGSCDHGICRCDQGYQGTECH. The BNR 4 repeat unit spans residues 1156 to 1167; it reads QYSNNGGIQWHL. An N-linked (GlcNAc...) asparagine glycan is attached at asparagine 1266. Cysteine 1270 and cysteine 1309 form a disulfide bridge. The stretch at 1322–1333 is one BNR 5 repeat; that stretch reads QYSHDAGMSWFL. Cysteines 1338 and 1347 form a disulfide. The region spanning 1408–1441 is the EGF-like 3 domain; that stretch reads ISEPCPSYCSGHGDCISGVCFCDLGYTAAQGTCV. Residues 1534-1545 form a BNR 6 repeat; sequence QYSNDNGILWHL. N-linked (GlcNAc...) asparagine glycosylation is present at asparagine 1599. Cysteine 1632 and cysteine 1672 are oxidised to a cystine. One copy of the BNR 7 repeat lies at 1685–1696; sequence QYSLNNGKDWHL. A disulfide bridge connects residues cysteine 1701 and cysteine 1708. Asparagine 1749 carries an N-linked (GlcNAc...) asparagine glycan. One can recognise an EGF-like 4 domain in the interval 1764–1795; that stretch reads LASGCPWMCSGRGICDAGRCVCDRGFGGPYCV. One copy of the BNR 8 repeat lies at 1883–1894; sequence QFSISGGITWHL. N-linked (GlcNAc...) asparagine glycosylation occurs at asparagine 1920. One copy of the BNR 9 repeat lies at 2042–2053; sequence EFSRDFGATWHL. Residues histidine 2060 and histidine 2073 each contribute to the Zn(2+) site. Residues 2128 to 2160 form the EGF-like 5 domain; sequence IGPQCEEMCNGQGSCINGTKCICDPGYSGPTCK. 3 cysteine pairs are disulfide-bonded: cysteine 2132/cysteine 2142, cysteine 2136/cysteine 2148, and cysteine 2150/cysteine 2159. Asparagine 2144 is a glycosylation site (N-linked (GlcNAc...) asparagine). Glutamate 2178 serves as a coordination point for Zn(2+). Cysteine 2194 and cysteine 2234 are oxidised to a cystine. The stretch at 2249-2260 is one BNR 10 repeat; sequence QYSLNGGLSWSL. Residue glutamate 2263 coordinates Zn(2+). 2 N-linked (GlcNAc...) asparagine glycosylation sites follow: asparagine 2268 and asparagine 2316. Intrachain disulfides connect cysteine 2347–cysteine 2386, cysteine 2392–cysteine 2558, and cysteine 2543–cysteine 2583. 3 residues coordinate Zn(2+): glutamate 2396, glutamate 2398, and histidine 2459. A BNR 11 repeat occupies 2398 to 2409; that stretch reads EYSVDLGLSWHP. In terms of domain architecture, EGF-like 6 spans 2477-2508; the sequence is IGDGCIDMCSGHGRCIQGNCVCDEQWGGLYCD. Residue asparagine 2568 is glycosylated (N-linked (GlcNAc...) asparagine). BNR repeat units lie at residues 2597 to 2608 and 2777 to 2788; these read EYSVNGGITWNL and QYSTDFGVSWNY. 5 disulfides stabilise this stretch: cysteine 2793–cysteine 2800, cysteine 2856–cysteine 2866, cysteine 2860–cysteine 2871, cysteine 2873–cysteine 2882, and cysteine 2918–cysteine 2965. The region spanning 2852 to 2883 is the EGF-like 7 domain; it reads LGPGCLDNCRGHGDCLREQCICDPGYSGPNCY. Asparagine 2961 carries N-linked (GlcNAc...) asparagine glycosylation. A BNR 14 repeat occupies 2978-2989; it reads DYSTDGGITWTL. N-linked (GlcNAc...) asparagine glycosylation is found at asparagine 3015 and asparagine 3072. The BNR 15 repeat unit spans residues 3142–3154; that stretch reads EYTKDARSDSWQL. Cysteine 3159 and cysteine 3169 form a disulfide bridge. N-linked (GlcNAc...) asparagine glycosylation is present at asparagine 3184. Positions 3227-3259 constitute an EGF-like 8 domain; it reads IGEACPKLCSGHGYCTTGAICICDESFQGDDCS. 4 disulfides stabilise this stretch: cysteine 3231–cysteine 3241, cysteine 3235–cysteine 3247, cysteine 3249–cysteine 3258, and cysteine 3295–cysteine 3345. Residues 3362–3373 form a BNR 16 repeat; sequence QYSVNNGITWHV. N-linked (GlcNAc...) asparagine glycans are attached at residues asparagine 3411 and asparagine 3438.

Belongs to the reelin family. In terms of assembly, oligomer of disulfide-linked homodimers. N-glycosylated and to a lesser extent also O-glycosylated. In terms of tissue distribution, abundantly produced during brain ontogenesis by the Cajal-Retzius cells and other pioneer neurons located in the telencephalic marginal zone and by granule cells of the external granular layer of the cerebellum. In adult brain, preferentially expressed in GABAergic interneurons of prefrontal cortices, temporal cortex, hippocampus and glutamatergic granule cells of cerebellum. Expression is reduced to about 50% in patients with schizophrenia. Also expressed in fetal and adult liver.

The protein resides in the secreted. It localises to the extracellular space. It is found in the extracellular matrix. In terms of biological role, extracellular matrix serine protease secreted by pioneer neurons that plays a role in layering of neurons in the cerebral cortex and cerebellum by coordinating cell positioning during neurodevelopment. Regulates microtubule function in neurons and neuronal migration. Binding to the extracellular domains of lipoprotein receptors VLDLR and LRP8/APOER2 induces tyrosine phosphorylation of DAB1 and modulation of TAU phosphorylation. Affects migration of sympathetic preganglionic neurons in the spinal cord, where it seems to act as a barrier to neuronal migration. Enzymatic activity is important for the modulation of cell adhesion. The protein is Reelin (RELN) of Homo sapiens (Human).